A 148-amino-acid polypeptide reads, in one-letter code: UPF0260 protein Maqu_1608 (148 aa).

It belongs to the UPF0260 family.

This is UPF0260 protein Maqu_1608 from Marinobacter nauticus (strain ATCC 700491 / DSM 11845 / VT8) (Marinobacter aquaeolei).